A 201-amino-acid chain; its full sequence is 3-isopropylmalate dehydratase small subunit (201 aa).

It belongs to the LeuD family. LeuD type 1 subfamily. Heterodimer of LeuC and LeuD.

The enzyme catalyses (2R,3S)-3-isopropylmalate = (2S)-2-isopropylmalate. The protein operates within amino-acid biosynthesis; L-leucine biosynthesis; L-leucine from 3-methyl-2-oxobutanoate: step 2/4. Its function is as follows. Catalyzes the isomerization between 2-isopropylmalate and 3-isopropylmalate, via the formation of 2-isopropylmaleate. The protein is 3-isopropylmalate dehydratase small subunit of Pasteurella multocida (strain Pm70).